Reading from the N-terminus, the 1124-residue chain is Regulator of nonsense transcripts 1 (1124 aa).

Residues 1-410 (MSVEAYGPSS…LRSSVGAPVE (410 aa)) form a sufficient for interaction with RENT2 region. Serine 10 and serine 31 each carry phosphoserine. Positions 39–69 (TLPSQTQTPPGGPGGAGGPGGAGAGGAAGQL) are disordered. Over residues 51–66 (PGGAGGPGGAGAGGAA) the composition is skewed to gly residues. The Upf1 CH-rich domain occupies 110 to 267 (TKDLPVHACS…NKLEELWKEN (158 aa)). Positions 118, 121, 132, 135, 140, 150, 154, 160, 178, 181, 204, and 208 each coordinate Zn(2+). A C3H region spans residues 118–150 (CSYCGIHDPACVVYCNTSKKWFCNGRGNTSGSH). Residues 132–160 (CNTSKKWFCNGRGNTSGSHIVNHLVRAKC) form a CC/SHH/C region. Residues 178-208 (CYNCGCRNVFLLGFIPAKADSVVVLLCRQPC) are C4. ATP contacts are provided by residues glutamine 481 and 501–505 (GTGKT). A Phosphoserine modification is found at serine 560. Positions 671, 708, and 839 each coordinate ATP. Serine 951 is modified (phosphoserine). Disordered stretches follow at residues 1004–1053 (FGQA…VASQ) and 1066–1091 (SMSQ…YLGD). Residue arginine 1014 is modified to Omega-N-methylarginine. The span at 1020-1029 (KTGRGGRQKN) shows a compositional bias: basic residues. Over residues 1036 to 1053 (PSQTTLPNSQASQDVASQ) the composition is skewed to polar residues. The span at 1066–1081 (SMSQPSQMSQPGLSQP) shows a compositional bias: low complexity. Phosphoserine is present on residues serine 1084, serine 1102, serine 1105, and serine 1122. Short sequence motifs ([ST]-Q motif) lie at residues 1084-1085 (SQ) and 1102-1103 (SQ). The tract at residues 1105-1124 (STYQGERAYQHGGVTGLSQY) is disordered.

Belongs to the DNA2/NAM7 helicase family. As to quaternary structure, found in a post-splicing messenger ribonucleoprotein (mRNP) complex. Associates with the exon junction complex (EJC). Associates with the SGM1C complex; is phosphorylated by the complex kinase component SGM1. Part of a complex composed of SMG1, DHX34 and UPF1; within the complex DHX34 acts as a scaffolding protein to facilitate SMG1 phosphorylation of UPF1. Interacts with UPF2. Interacts with UPF3A and UPF3B. Interacts with EST1A. Interacts with SLBP. Interacts (when hyperphosphorylated) with PNRC2. Interacts with AGO1 and AGO2. Interacts with GSPT2. Interacts with isoform 1 and isoform 5 of ADAR/ADAR1. Interacts with SMG7. Interacts with ZC3H12A; this interaction occurs in a mRNA translationally active- and termination-dependent manner and is essential for ZC3H12A-mediated degradation of target mRNAs. Interacts with CPSF6. Interacts with MOV10; the interaction is direct and RNA-dependent. Interacts with SHFL; the interaction increases in the presence of RNA. Interacts with UPF2 and DDX4; interactions are mediated by TDRD6. Interacts with DHX34 and PABPC1/PABP1; the interactions are RNA-independent. Interacts with RBM46. Post-translationally, phosphorylated by SMG1; required for formation of mRNA surveillance complexes. Localizes in male germ cells.

It is found in the cytoplasm. Its subcellular location is the P-body. The protein localises to the nucleus. It localises to the perinuclear region. It carries out the reaction ATP + H2O = ADP + phosphate + H(+). Functionally, RNA-dependent helicase required for nonsense-mediated decay (NMD) of aberrant mRNAs containing premature stop codons and modulates the expression level of normal mRNAs. Is recruited to mRNAs upon translation termination and undergoes a cycle of phosphorylation and dephosphorylation; its phosphorylation appears to be a key step in NMD. Recruited by release factors to stalled ribosomes together with the SMG1C protein kinase complex to form the transient SURF (SMG1-UPF1-eRF1-eRF3) complex. In EJC-dependent NMD, the SURF complex associates with the exon junction complex (EJC) (located 50-55 or more nucleotides downstream from the termination codon) through UPF2 and allows the formation of an UPF1-UPF2-UPF3 surveillance complex which is believed to activate NMD. Phosphorylated UPF1 is recognized by EST1B/SMG5, SMG6 and SMG7 which are thought to provide a link to the mRNA degradation machinery involving exonucleolytic and endonucleolytic pathways, and to serve as adapters to protein phosphatase 2A (PP2A), thereby triggering UPF1 dephosphorylation and allowing the recycling of NMD factors. UPF1 can also activate NMD without UPF2 or UPF3, and in the absence of the NMD-enhancing downstream EJC indicative for alternative NMD pathways. Plays a role in replication-dependent histone mRNA degradation at the end of phase S; the function is independent of UPF2. For the recognition of premature termination codons (PTC) and initiation of NMD a competitive interaction between UPF1 and PABPC1 with the ribosome-bound release factors is proposed. The ATPase activity of UPF1 is required for disassembly of mRNPs undergoing NMD. Together with UPF2 and dependent on TDRD6, mediates the degradation of mRNA harboring long 3'UTR by inducing the NMD machinery. Also capable of unwinding double-stranded DNA and translocating on single-stranded DNA. This Mus musculus (Mouse) protein is Regulator of nonsense transcripts 1.